Reading from the N-terminus, the 764-residue chain is Thyrotropin receptor (764 aa).

An N-terminal signal peptide occupies residues 1-20; it reads MRPPPLLHLALLLALPRSLG. Residues 21–413 are Extracellular-facing; sequence GKGCPSPPCE…EFNPCEDIMG (393 aa). An intrachain disulfide couples Cys-31 to Cys-41. 2 N-linked (GlcNAc...) asparagine glycosylation sites follow: Asn-77 and Asn-99. LRR repeat units follow at residues 125-149, 150-174, 176-199, 201-223, 225-248, and 250-271; these read LPLL…KVYS, TDVF…AFQG, CNET…AFNG, KLDA…AFGG, YSGP…GLEH, and KELI…SFLH. Residues Asn-177 and Asn-198 are each glycosylated (N-linked (GlcNAc...) asparagine). The N-linked (GlcNAc...) asparagine glycan is linked to Asn-302. A Sulfotyrosine modification is found at Tyr-385. The helical transmembrane segment at 414–441 threads the bilayer; it reads YKFLRIVVWFVSLLALLGNVFVLIVLLT. At 442-450 the chain is on the cytoplasmic side; sequence SHYKLTVPR. Residues 451–473 traverse the membrane as a helical segment; it reads FLMCNLAFADFCMGMYLLLIASV. The Extracellular portion of the chain corresponds to 474-494; it reads DLYTHSEYYNHAIDWQTGPGC. The cysteines at positions 494 and 569 are disulfide-linked. A helical membrane pass occupies residues 495 to 517; it reads NTAGFFTVFASELSVYTLTVITL. The Cytoplasmic portion of the chain corresponds to 518–537; sequence ERWYAITFAMRLDRKIRLRH. The helical transmembrane segment at 538–560 threads the bilayer; the sequence is AYAIMVGGWVCCFLLALLPLVGI. At 561-580 the chain is on the extracellular side; it reads SSYAKVSICLPMDTETPLAL. Residues 581-602 traverse the membrane as a helical segment; sequence AYIILVLLLNIVAFIIVCSCYV. Over 603-625 the chain is Cytoplasmic; that stretch reads KIYITVRNPQYNPGDKDTKIAKR. Residues 626-649 traverse the membrane as a helical segment; sequence MAVLIFTDFMCMAPISFYALSALM. Residues 650 to 660 are Extracellular-facing; it reads NKPLITVTNSK. Residues 661 to 682 traverse the membrane as a helical segment; it reads ILLVLFYPLNSCANPFLYAIFT. Topologically, residues 683–764 are cytoplasmic; it reads KAFQRDVFIL…ISKEYNQTVL (82 aa). Positions 762-764 match the PDZ-binding motif; the sequence is TVL.

Belongs to the G-protein coupled receptor 1 family. FSH/LSH/TSH subfamily. In terms of assembly, interacts with heterodimer GPHA2:GPHB5; this interaction stimulates cAMP production. Interacts (via the PDZ-binding motif) with SCRIB; regulates TSHR trafficking and function. Post-translationally, glycosylated. Sulfated. Sulfation on Tyr-385 plays a role in thyrotropin receptor binding and activation.

The protein resides in the cell membrane. It is found in the basolateral cell membrane. In terms of biological role, receptor for the thyroid-stimulating hormone (TSH) or thyrotropin. Also acts as a receptor for the heterodimeric glycoprotein hormone (GPHA2:GPHB5) or thyrostimulin. The activity of this receptor is mediated by G proteins which activate adenylate cyclase. Plays a central role in controlling thyroid cell metabolism. The sequence is that of Thyrotropin receptor (TSHR) from Canis lupus familiaris (Dog).